The sequence spans 289 residues: 4-diphosphocytidyl-2-C-methyl-D-erythritol kinase (289 aa).

Residue Lys-10 is part of the active site. Position 94-104 (94-104 (PVAAGLAGGSS)) interacts with ATP. Asp-136 is an active-site residue.

Belongs to the GHMP kinase family. IspE subfamily.

It catalyses the reaction 4-CDP-2-C-methyl-D-erythritol + ATP = 4-CDP-2-C-methyl-D-erythritol 2-phosphate + ADP + H(+). The protein operates within isoprenoid biosynthesis; isopentenyl diphosphate biosynthesis via DXP pathway; isopentenyl diphosphate from 1-deoxy-D-xylulose 5-phosphate: step 3/6. In terms of biological role, catalyzes the phosphorylation of the position 2 hydroxy group of 4-diphosphocytidyl-2C-methyl-D-erythritol. This Bacillus anthracis (strain CDC 684 / NRRL 3495) protein is 4-diphosphocytidyl-2-C-methyl-D-erythritol kinase.